The primary structure comprises 224 residues: dTTP/UTP pyrophosphatase (224 aa).

Catalysis depends on Asp77, which acts as the Proton acceptor.

It belongs to the Maf family. YhdE subfamily. Requires a divalent metal cation as cofactor.

It localises to the cytoplasm. The enzyme catalyses dTTP + H2O = dTMP + diphosphate + H(+). The catalysed reaction is UTP + H2O = UMP + diphosphate + H(+). Functionally, nucleoside triphosphate pyrophosphatase that hydrolyzes dTTP and UTP. May have a dual role in cell division arrest and in preventing the incorporation of modified nucleotides into cellular nucleic acids. This Dehalococcoides mccartyi (strain ATCC BAA-2100 / JCM 16839 / KCTC 5957 / BAV1) protein is dTTP/UTP pyrophosphatase.